A 268-amino-acid chain; its full sequence is Fatty acid elongase sre1 (268 aa).

Transmembrane regions (helical) follow at residues 31–51 (VFPF…QAIM), 62–82 (FSII…SGVM), 110–130 (IGFW…DTVI), 137–157 (PIIF…WQWL), 161–181 (WLVG…LMYY), 198–218 (ITKA…YWFV), and 227–247 (APLS…ILFG).

This sequence belongs to the ELO family.

Its subcellular location is the membrane. The catalysed reaction is a very-long-chain acyl-CoA + malonyl-CoA + H(+) = a very-long-chain 3-oxoacyl-CoA + CO2 + CoA. Functionally, could be implicated in synthesis of very long chain fatty acids. This chain is Fatty acid elongase sre1 (sre1), found in Dictyostelium discoideum (Social amoeba).